The following is a 310-amino-acid chain: Vomeronasal type-1 receptor 90 (310 aa).

Residues 1 to 20 are Extracellular-facing; that stretch reads MRRISTLYGVVDKQAIFFSE. The chain crosses the membrane as a helical span at residues 21 to 41; that stretch reads VVIGISFNSILFLFHIFQFLL. Residues 42–46 are Cytoplasmic-facing; the sequence is ERRLR. A helical membrane pass occupies residues 47–67; the sequence is ITDLIISLLALIHLGMLTVMG. Residues 68–93 lie on the Extracellular side of the membrane; the sequence is FRAVDIFASQNVWNDIKCKSLAHLHR. The cysteines at positions 85 and 172 are disulfide-linked. The helical transmembrane segment at 94–114 threads the bilayer; that stretch reads LLRGLSLCATCLLSIFQAITL. The Cytoplasmic segment spans residues 115 to 135; sequence SPRSSCLAKFKYKSTQHSLCS. The helical transmembrane segment at 136-156 threads the bilayer; it reads LLVLWAFYMSCGTHYSFTIVA. The Extracellular portion of the chain corresponds to 157–183; the sequence is DYNFSSRSLIFVTESCIILPMDYITRH. An N-linked (GlcNAc...) asparagine glycan is attached at Asn159. The chain crosses the membrane as a helical span at residues 184-204; the sequence is LFFILGIFRDVSFIGLMALSS. Topologically, residues 205–238 are cytoplasmic; it reads GYMVALLCRHRKQAQHLHRTSLSPKASPEQRATR. Residues 239–259 traverse the membrane as a helical segment; it reads TILLLMSFFVLMYCLDCTISA. At 260-271 the chain is on the extracellular side; it reads SRLMHNGEPIHH. Residues 272–292 form a helical membrane-spanning segment; sequence SIQMMVSNSYATLSPLLLIVT. Residues 293 to 310 lie on the Cytoplasmic side of the membrane; sequence ENRISRFLKSLLGRTVDA.

Belongs to the G-protein coupled receptor 1 family. In terms of tissue distribution, expressed in 1-4% of neurons of the vomeronasal organ. Only one pheromone receptor gene may be expressed in a particular neuron. Not expressed in the main olfactory epithelium.

The protein resides in the cell membrane. Functionally, putative pheromone receptor implicated in the regulation of social as well as reproductive behavior. This is Vomeronasal type-1 receptor 90 (Vom1r90) from Rattus norvegicus (Rat).